The chain runs to 227 residues: Lipoprotein-releasing system ATP-binding protein LolD (227 aa).

One can recognise an ABC transporter domain in the interval 7–227 (LKLTGVERHY…TISDGKVVEF (221 aa)). An ATP-binding site is contributed by 43-50 (APSGTGKS).

This sequence belongs to the ABC transporter superfamily. Lipoprotein translocase (TC 3.A.1.125) family. The complex is composed of two ATP-binding proteins (LolD) and two transmembrane proteins (LolC and LolE).

The protein resides in the cell inner membrane. Its function is as follows. Part of the ABC transporter complex LolCDE involved in the translocation of mature outer membrane-directed lipoproteins, from the inner membrane to the periplasmic chaperone, LolA. Responsible for the formation of the LolA-lipoprotein complex in an ATP-dependent manner. The protein is Lipoprotein-releasing system ATP-binding protein LolD of Rhizobium etli (strain ATCC 51251 / DSM 11541 / JCM 21823 / NBRC 15573 / CFN 42).